Reading from the N-terminus, the 287-residue chain is MSWDPNPVPRTLRCWRLRRASETALQSSRRAVEDQLKICGHRRDADVFELFLSKKELTEVIDLSRFKKLKYLWLHHNKLHGITFLTRNYCLTELYLNNNAIFEIEGLHYLPSLHILLLHHNELTNIDATVKELKGMLNLKILSLYQNPLCQYNLYRLYIIYHLPGVELLDRNQVTEKERRSMITIFNHKKAHIVQSIAFGGKVDASWDPKSPFKQKPAQRVPSDFAFANNVDKTVLDDPEDAVFVRSMKRSVMTLTSMNWDTVPTREERYLEEEGTETAQMLTVTLR.

LRR repeat units lie at residues 46–67, 68–89, 90–111, and 112–133; these read DVFE…SRFK, KLKY…TRNY, CLTE…HYLP, and SLHI…VKEL. An LRRCT domain is found at 147–185; sequence NPLCQYNLYRLYIIYHLPGVELLDRNQVTEKERRSMITI.

The protein is Leucine-rich repeat-containing protein 72 (LRRC72) of Homo sapiens (Human).